Consider the following 461-residue polypeptide: MTRTIVVGLGRSGLGAARLLKQQNHDVVVFERGNNEALQHTSKTLAEEGIQVVLGQPLTLQSFDAWRDNLDAVVIGPGIPWDHPTLVQLRSEGVQVRGEMDTAWDALQQIPWIGITGTNGKTTVTHLLSHVLEAAGLTAPMGGNIGLSAAELACQIGSGAKPRPDWLVMELSSYQIEAAPAVAPKIGIWTTLTPDHLERHGSLEAYRAIKRGLLERSECALFNADDPDLRQQRSSWNRGTWVSSEGAHPDNQPADLWIDDEGMVRNNTTRLFAADVLAMPGRHNRQNLLLVTAAALEAGLSPQQIADALRTFPGVPHRLEQLGTLAGASVFNDSKATNYDAAEVGLRAVQGPVVVLAGGQTKQGDASGWLKQLQSKACSLILFGAGADELASLAKAAGYPGELLQCPELESAVNLAEGAVQRHQASSLLLSPACASFDQYRDFEARGEHFRTLINPLLDEA.

ATP is bound at residue 117–123 (GTNGKTT).

The protein belongs to the MurCDEF family.

Its subcellular location is the cytoplasm. The catalysed reaction is UDP-N-acetyl-alpha-D-muramoyl-L-alanine + D-glutamate + ATP = UDP-N-acetyl-alpha-D-muramoyl-L-alanyl-D-glutamate + ADP + phosphate + H(+). It participates in cell wall biogenesis; peptidoglycan biosynthesis. Its function is as follows. Cell wall formation. Catalyzes the addition of glutamate to the nucleotide precursor UDP-N-acetylmuramoyl-L-alanine (UMA). This Synechococcus sp. (strain CC9605) protein is UDP-N-acetylmuramoylalanine--D-glutamate ligase.